The following is an 84-amino-acid chain: Exodeoxyribonuclease 7 small subunit (84 aa).

It belongs to the XseB family. Heterooligomer composed of large and small subunits.

Its subcellular location is the cytoplasm. The catalysed reaction is Exonucleolytic cleavage in either 5'- to 3'- or 3'- to 5'-direction to yield nucleoside 5'-phosphates.. Its function is as follows. Bidirectionally degrades single-stranded DNA into large acid-insoluble oligonucleotides, which are then degraded further into small acid-soluble oligonucleotides. This is Exodeoxyribonuclease 7 small subunit from Bartonella bacilliformis (strain ATCC 35685 / KC583 / Herrer 020/F12,63).